We begin with the raw amino-acid sequence, 571 residues long: 15-cis-phytoene desaturase, chloroplastic/chromoplastic (571 aa).

The transit peptide at 1 to 96 (MDTGCLSSMN…FRNSERPSKP (96 aa)) directs the protein to the chloroplast and chromoplast. Residues alanine 107, 126 to 127 (EA), lysine 134, 151 to 152 (HI), and tyrosine 157 contribute to the FAD site. Arginine 292 contacts substrate. Positions 334 and 523 each coordinate FAD. Residue alanine 531 participates in substrate binding. Methionine 533 contributes to the FAD binding site.

Belongs to the carotenoid/retinoid oxidoreductase family. In terms of assembly, homotetramer. It depends on FAD as a cofactor.

The protein localises to the plastid. It is found in the chloroplast. The protein resides in the chromoplast. It localises to the membrane. The catalysed reaction is 2 a plastoquinone + 15-cis-phytoene = 9,9',15-tri-cis-zeta-carotene + 2 a plastoquinol. Its pathway is carotenoid biosynthesis; lycopene biosynthesis. Functionally, converts phytoene into zeta-carotene via the intermediary of phytofluene by the symmetrical introduction of two double bonds at the C-11 and C-11' positions of phytoene with a concomitant isomerization of two neighboring double bonds at the C9 and C9' positions from trans to cis. The polypeptide is 15-cis-phytoene desaturase, chloroplastic/chromoplastic (PDS1) (Zea mays (Maize)).